Reading from the N-terminus, the 241-residue chain is tRNA (guanine-N(7)-)-methyltransferase B (241 aa).

Residues glycine 61, glutamate 84, arginine 86, asparagine 117, alanine 118, and leucine 137 each coordinate S-adenosyl-L-methionine. Aspartate 140 is a catalytic residue. The alphaC helix stretch occupies residues 141-149 (PHFKKTKHK). 2 residues coordinate S-adenosyl-L-methionine: threonine 215 and glutamate 217. The interval 215 to 223 (TEEGKKVQR) is alpha6 helix.

It belongs to the class I-like SAM-binding methyltransferase superfamily. TrmB family. As to quaternary structure, catalytic component of the METTL1-WDR4 complex, composed of mettl1 and wdr4.

It localises to the nucleus. It catalyses the reaction guanosine(46) in tRNA + S-adenosyl-L-methionine = N(7)-methylguanosine(46) in tRNA + S-adenosyl-L-homocysteine. It carries out the reaction a guanosine in mRNA + S-adenosyl-L-methionine = an N(7)-methylguanosine in mRNA + S-adenosyl-L-homocysteine. The enzyme catalyses a guanosine in miRNA + S-adenosyl-L-methionine = an N(7)-methylguanosine in miRNA + S-adenosyl-L-homocysteine. Its pathway is tRNA modification; N(7)-methylguanine-tRNA biosynthesis. Its function is as follows. Catalytic component of METTL1-WDR4 methyltransferase complex that mediates the formation of N(7)-methylguanine in a subset of RNA species, such as tRNAs, mRNAs and microRNAs (miRNAs). Catalyzes the formation of N(7)-methylguanine at position 46 (m7G46) in a large subset of tRNAs that contain the 5'-RAGGU-3' motif within the variable loop. M7G46 interacts with C13-G22 in the D-loop to stabilize tRNA tertiary structure and protect tRNAs from decay. Also acts as a methyltransferase for a subset of internal N(7)-methylguanine in mRNAs. Internal N(7)-methylguanine methylation of mRNAs in response to stress promotes their relocalization to stress granules, thereby suppressing their translation. Also methylates a specific subset of miRNAs. The polypeptide is tRNA (guanine-N(7)-)-methyltransferase B (mettl1-B) (Xenopus tropicalis (Western clawed frog)).